Here is a 97-residue protein sequence, read N- to C-terminus: YcgL domain-containing protein CKO_01183 (97 aa).

The 85-residue stretch at 1–85 (MFCVIYRSSK…PPEDLLKQHL (85 aa)) folds into the YcgL domain. The tract at residues 74–97 (PPPPEDLLKQHLSAPGENKPDAKS) is disordered.

The sequence is that of YcgL domain-containing protein CKO_01183 from Citrobacter koseri (strain ATCC BAA-895 / CDC 4225-83 / SGSC4696).